Consider the following 683-residue polypeptide: Zinc finger protein 418 (683 aa).

Positions 48 to 123 constitute a KRAB domain; the sequence is VTIEDVTVYF…TPKQGQLRQK (76 aa). Over residues 102–120 the composition is skewed to polar residues; the sequence is QSLSQTEAPQVRTPKQGQL. Disordered regions lie at residues 102–124 and 209–247; these read QSLS…RQKP and DIPN…QHRL. The segment covering 225–239 has biased composition (basic and acidic residues); that stretch reads FHRDKNNSESDEYKK. C2H2-type zinc fingers lie at residues 287-309, 315-337, 343-365, 371-393, 399-421, 427-449, 455-477, 483-505, 511-533, 539-561, 567-589, 595-617, 623-645, and 651-673; these read YECH…QRRH, YKCG…CRVH, FECL…QRTH, YECS…QRTH, YECG…QRVH, YHCE…SKIH, YECG…QRTH, YECR…RRIH, YECE…QRVH, YKCE…QRTH, YECA…QKIH, YHCD…QRVH, YTCG…RRIH, and YECD…QLLH.

Belongs to the krueppel C2H2-type zinc-finger protein family.

It localises to the nucleus. Functionally, transcriptional repressor. May play a role as regulator of the ubiquitin-proteasome system and autophagy-lysosomal pathway. In Rattus norvegicus (Rat), this protein is Zinc finger protein 418.